Reading from the N-terminus, the 507-residue chain is Anthranilate synthase component 1 (507 aa).

Position 65 (serine 65) interacts with L-tryptophan. A Phosphoserine modification is found at serine 81. Threonine 223 carries the phosphothreonine modification. Residue 280–282 coordinates L-tryptophan; that stretch reads PYL. 316–317 is a chorismate binding site; the sequence is GT. Glutamate 343 serves as a coordination point for Mg(2+). Residues tyrosine 431, arginine 452, 466–468, and glycine 468 each bind chorismate; that span reads GGG. Glutamate 481 contacts Mg(2+).

The protein belongs to the anthranilate synthase component I family. As to quaternary structure, tetramer of two components I and two components II. It depends on Mg(2+) as a cofactor.

It catalyses the reaction chorismate + L-glutamine = anthranilate + pyruvate + L-glutamate + H(+). The protein operates within amino-acid biosynthesis; L-tryptophan biosynthesis; L-tryptophan from chorismate: step 1/5. This is Anthranilate synthase component 1 (TRP2) from Saccharomyces cerevisiae (strain ATCC 204508 / S288c) (Baker's yeast).